We begin with the raw amino-acid sequence, 850 residues long: Transcription initiation factor TFIID subunit 4B (850 aa).

The sufficient for interaction with ZNF628 stretch occupies residues 99–240 (GTTTIQLPAN…TPSNDARLKA (142 aa)). Residues 256 to 353 (ENVKKCKNFL…VKEVSGDVVI (98 aa)) enclose the TAFH domain. Residues 504–526 (PSTLLPQAAGIPQTAKVKQLVVQ) are required for interaction with P65/RELA. A Nuclear export signal motif is present at residues 509–549 (PQAAGIPQTAKVKQLVVQQPSGSSVNHVTSISHSSPLSTQN). Ser584 carries the phosphoserine modification. The Histone-fold domain occupies 642–691 (PFLVIGALQKRILDIGKKHDITELNSDAVNLISHATQERLRGLLEKLTTI). The tract at residues 788–812 (KRPLESGNESFKDNPSTSGTSSLTA) is disordered. The span at 794–812 (GNESFKDNPSTSGTSSLTA) shows a compositional bias: polar residues. The required for interaction with TAF12 stretch occupies residues 818 to 850 (PRITRICLRDLIFCMEQEREMKYSRALYLALLK).

It belongs to the TAF4 family. In terms of assembly, TFIID is composed of TATA binding protein (TBP) and a number of TBP-associated factors (TAFs). Heterodimerizes with TAF12/TFII20 via the C-terminal H2A-like histone-fold domain. This heterodimer forms a histone-like octamer with the TAF6/TAFII70-TAF9/TAFII31 heterodimer. Interacts with P65/RELA homodimers and P65/RELA-REL heterodimers. Interaction with POU2AF1, via its C-terminal activation domain, is required for octamer-dependent transcription. Interacts with ZNF628. Highly expressed in the testes and ovary, whereas lower levels are detected in most other tissues.

The protein localises to the nucleus. It is found in the cytoplasm. Cell type-specific subunit of the general transcription factor TFIID that may function as a gene-selective coactivator in certain cells. TFIID is a multimeric protein complex that plays a central role in mediating promoter responses to various activators asond repressors. TAF4B is a transcriptional coactivator of the p65/RELA NF-kappa-B subunit. Involved in the activation of a subset of antiapoptotic genes including TNFAIP3. Through interaction with OCBA/POU2AF1, acts as a coactivator of B-cell-specific transcription. Plays a role in spermiogenesis and oogenesis. This is Transcription initiation factor TFIID subunit 4B (Taf4b) from Mus musculus (Mouse).